Consider the following 814-residue polypeptide: Lon protease 1 (814 aa).

Basic and acidic residues predominate over residues 1–17 (MTDDRDKTNEDPEKIIE). Residues 1-28 (MTDDRDKTNEDPEKIIEADFNPEDPDDA) form a disordered region. In terms of domain architecture, Lon N-terminal spans 49–245 (LPIIPLRPRP…KVLVLLKKEL (197 aa)). 398–405 (GPPGVGKT) contributes to the ATP binding site. Residues 633–814 (EDVPGVVTGL…YRDVYQVAFG (182 aa)) form the Lon proteolytic domain. Active-site residues include serine 721 and lysine 764.

This sequence belongs to the peptidase S16 family. As to quaternary structure, homohexamer. Organized in a ring with a central cavity.

The protein localises to the cytoplasm. It catalyses the reaction Hydrolysis of proteins in presence of ATP.. Its function is as follows. ATP-dependent serine protease that mediates the selective degradation of mutant and abnormal proteins as well as certain short-lived regulatory proteins. Required for cellular homeostasis and for survival from DNA damage and developmental changes induced by stress. Degrades polypeptides processively to yield small peptide fragments that are 5 to 10 amino acids long. Binds to DNA in a double-stranded, site-specific manner. The sequence is that of Lon protease 1 from Syntrophotalea carbinolica (strain DSM 2380 / NBRC 103641 / GraBd1) (Pelobacter carbinolicus).